The primary structure comprises 120 residues: Glycine cleavage system H protein (120 aa).

The region spanning 17-99 (IATVGITSHA…QGAGWLYRMR (83 aa)) is the Lipoyl-binding domain. An N6-lipoyllysine modification is found at lysine 58.

The protein belongs to the GcvH family. In terms of assembly, the glycine cleavage system is composed of four proteins: P, T, L and H. (R)-lipoate serves as cofactor.

The glycine cleavage system catalyzes the degradation of glycine. The H protein shuttles the methylamine group of glycine from the P protein to the T protein. In Methylobacterium nodulans (strain LMG 21967 / CNCM I-2342 / ORS 2060), this protein is Glycine cleavage system H protein.